Reading from the N-terminus, the 701-residue chain is Larval serum protein 2 (701 aa).

Residues 1–21 (MKSFTVIALAAVALLATLGQA) form the signal peptide. Residue Asn204 is glycosylated (N-linked (GlcNAc...) asparagine).

This sequence belongs to the hemocyanin family. As to quaternary structure, homohexamer.

The protein resides in the secreted. It localises to the extracellular space. Its function is as follows. Larval storage protein (LSP) which may serve as a store of amino acids for synthesis of adult proteins. This chain is Larval serum protein 2 (Lsp2), found in Drosophila melanogaster (Fruit fly).